Reading from the N-terminus, the 325-residue chain is Ribosomal RNA small subunit methyltransferase H (325 aa).

Residues 38 to 40 (GGY), Asp-55, Phe-82, Asp-103, and Gln-110 each bind S-adenosyl-L-methionine. 2 disordered regions span residues 256–275 (SGGD…AARA) and 281–307 (PARK…RSAV).

The protein belongs to the methyltransferase superfamily. RsmH family.

It localises to the cytoplasm. The catalysed reaction is cytidine(1402) in 16S rRNA + S-adenosyl-L-methionine = N(4)-methylcytidine(1402) in 16S rRNA + S-adenosyl-L-homocysteine + H(+). In terms of biological role, specifically methylates the N4 position of cytidine in position 1402 (C1402) of 16S rRNA. This Sphingopyxis alaskensis (strain DSM 13593 / LMG 18877 / RB2256) (Sphingomonas alaskensis) protein is Ribosomal RNA small subunit methyltransferase H.